The following is a 290-amino-acid chain: Probable protein phosphatase 2C 62 (290 aa).

Residues 38 to 288 (KHGYHLVKGK…DDISCIVVKF (251 aa)) enclose the PPM-type phosphatase domain. Mn(2+) is bound by residues Asp-75, Gly-76, Asp-240, and Asp-279.

Belongs to the PP2C family. Requires Mg(2+) as cofactor. The cofactor is Mn(2+).

It catalyses the reaction O-phospho-L-seryl-[protein] + H2O = L-seryl-[protein] + phosphate. The enzyme catalyses O-phospho-L-threonyl-[protein] + H2O = L-threonyl-[protein] + phosphate. The sequence is that of Probable protein phosphatase 2C 62 from Oryza sativa subsp. japonica (Rice).